A 440-amino-acid polypeptide reads, in one-letter code: Polyprenol-phosphate-mannose-dependent alpha-(1-2)-phosphatidylinositol mannoside mannosyltransferase (440 aa).

The next 11 membrane-spanning stretches (helical) occupy residues 15–35 (LAPT…VLWV), 87–107 (LAAI…SSAI), 109–129 (ATTL…LDVW), 144–161 (AWLA…LEPI), 164–184 (NFEF…DCVP), 193–213 (LLLG…LYFL), 224–244 (TAAT…SDSV), 281–301 (PRFI…VWAA), 316–336 (APVL…PVSW), 360–380 (VWFT…PITL), and 395–415 (LAGG…GLVS). Positions 419 to 440 (THTGDAHETDEPLVPLARGEAG) are disordered.

This sequence belongs to the glycosyltransferase 87 family.

The protein localises to the cell membrane. It functions in the pathway phospholipid metabolism; phosphatidylinositol metabolism. Responsible for the addition of alpha-(1-2) mannose branches to the linear mannan core on the biosynthetic pathway to mature Lipoarabinomannan (LAM). The polypeptide is Polyprenol-phosphate-mannose-dependent alpha-(1-2)-phosphatidylinositol mannoside mannosyltransferase (Mycolicibacterium smegmatis (strain ATCC 700084 / mc(2)155) (Mycobacterium smegmatis)).